Consider the following 559-residue polypeptide: DNA primase (559 aa).

The CHC2-type zinc-finger motif lies at 37 to 61; sequence CPFHEERSASFSVNQIKGFYHCFGC. Positions 246–327 constitute a Toprim domain; that stretch reads KQVIVTEGYL…RGGVILFENN (82 aa). 3 residues coordinate Mg(2+): glutamate 252, aspartate 296, and aspartate 298.

The protein belongs to the DnaG primase family. In terms of assembly, monomer. The C-terminal domain DnaB-binding domain exists as a dimer in solution. Interacts with DnaB via its C-terminal domain (residues 415-559 of DnaG); up to 3 DnaG fragments bind to a DnaB hexamer. Zn(2+) serves as cofactor. Requires Mg(2+) as cofactor.

The enzyme catalyses ssDNA + n NTP = ssDNA/pppN(pN)n-1 hybrid + (n-1) diphosphate.. Its function is as follows. RNA polymerase that catalyzes the synthesis of short RNA molecules used as primers for DNA polymerase during DNA replication. Stimulates the 5'-3' DNA helicase activity of DnaB. In Helicobacter pylori (strain ATCC 700392 / 26695) (Campylobacter pylori), this protein is DNA primase.